A 474-amino-acid chain; its full sequence is Glutamate--tRNA ligase (474 aa).

The 'HIGH' region signature appears at 9–19 (PSPTGYLHVGG). A 'KMSKS' region motif is present at residues 240–244 (KLSKR). An ATP-binding site is contributed by lysine 243.

Belongs to the class-I aminoacyl-tRNA synthetase family. Glutamate--tRNA ligase type 1 subfamily. As to quaternary structure, monomer.

The protein resides in the cytoplasm. The enzyme catalyses tRNA(Glu) + L-glutamate + ATP = L-glutamyl-tRNA(Glu) + AMP + diphosphate. Functionally, catalyzes the attachment of glutamate to tRNA(Glu) in a two-step reaction: glutamate is first activated by ATP to form Glu-AMP and then transferred to the acceptor end of tRNA(Glu). This is Glutamate--tRNA ligase from Aliivibrio salmonicida (strain LFI1238) (Vibrio salmonicida (strain LFI1238)).